The following is a 166-amino-acid chain: NAD(P)H-quinone oxidoreductase subunit I, chloroplastic (166 aa).

4Fe-4S ferredoxin-type domains follow at residues 55–84 (GRIH…VDWK) and 95–124 (LNYS…MTEE). Residues C64, C67, C70, C74, C104, C107, C110, and C114 each contribute to the [4Fe-4S] cluster site.

It belongs to the complex I 23 kDa subunit family. As to quaternary structure, NDH is composed of at least 16 different subunits, 5 of which are encoded in the nucleus. [4Fe-4S] cluster is required as a cofactor.

It localises to the plastid. It is found in the chloroplast thylakoid membrane. It carries out the reaction a plastoquinone + NADH + (n+1) H(+)(in) = a plastoquinol + NAD(+) + n H(+)(out). It catalyses the reaction a plastoquinone + NADPH + (n+1) H(+)(in) = a plastoquinol + NADP(+) + n H(+)(out). Its function is as follows. NDH shuttles electrons from NAD(P)H:plastoquinone, via FMN and iron-sulfur (Fe-S) centers, to quinones in the photosynthetic chain and possibly in a chloroplast respiratory chain. The immediate electron acceptor for the enzyme in this species is believed to be plastoquinone. Couples the redox reaction to proton translocation, and thus conserves the redox energy in a proton gradient. In Hulsea algida (Pacific hulsea), this protein is NAD(P)H-quinone oxidoreductase subunit I, chloroplastic.